The following is a 69-amino-acid chain: MDKFRWHPEFDFSKVRIRYIDRPKGYSEVSGDDIKEIGHMFIYLYSGAAIPHHRIVEIRYGEEVVWRRP.

It belongs to the UPF0248 family.

The sequence is that of UPF0248 protein AF_0420 from Archaeoglobus fulgidus (strain ATCC 49558 / DSM 4304 / JCM 9628 / NBRC 100126 / VC-16).